The primary structure comprises 655 residues: Polycyclic ketone monooxygenase (655 aa).

Gly-89, Asp-113, Ala-114, Thr-121, Trp-124, Cys-132, Asp-133, Tyr-139, and Val-183 together coordinate FAD. Positions 277, 280, 301, 425, and 452 each coordinate NADPH. An intrachain disulfide couples Cys-424 to Cys-596. 2 residues coordinate FAD: Thr-492 and Asn-541. Position 600 (Tyr-600) interacts with NADPH.

The protein belongs to the FAD-binding monooxygenase family. It depends on FAD as a cofactor.

Functionally, polycyclic ketone monooxygenase (PockeMO) that displays excellent enantioselectivity, acts on various ketones, and is particularly active on polycyclic molecules. Breaks C-C bonds through the insertion of a single oxygen atom adjacent to a carbonyl moiety, yielding esters or lactones from ketones. PockeMO is able to convert linear ketones (including cyclohexane and to a lesser extend 4-octanone), cyclic ketones (including cyclohexanone and cyclooctanone), bicyclic ketones and polycyclic ketones (steroids). Performs oxidation of the keto functionalities at both the A and D rings of steroids. Particularly, oxidizes the A ring of stanolone or pregnenolone. Selectively oxidizes the D ring of androstenedione or androstadienedione, steroids with keto groups in both the A and D rings, to yield the pharmaceutically relevant testo(lo)lactone. This is Polycyclic ketone monooxygenase from Thermothelomyces thermophilus (strain ATCC 42464 / BCRC 31852 / DSM 1799) (Sporotrichum thermophile).